A 136-amino-acid chain; its full sequence is UPF0310 protein HH_1062 (136 aa).

It belongs to the UPF0310 family.

The protein is UPF0310 protein HH_1062 of Helicobacter hepaticus (strain ATCC 51449 / 3B1).